We begin with the raw amino-acid sequence, 95 residues long: Costars family protein WS02710_H03 (95 aa).

It belongs to the costars family.

The protein is Costars family protein WS02710_H03 of Picea sitchensis (Sitka spruce).